The primary structure comprises 423 residues: Putative competence-damage inducible protein (423 aa).

Belongs to the CinA family.

In Streptococcus equi subsp. zooepidemicus (strain H70), this protein is Putative competence-damage inducible protein.